A 268-amino-acid chain; its full sequence is Undecaprenyl-diphosphatase (268 aa).

A run of 7 helical transmembrane segments spans residues 5–25, 43–63, 84–104, 107–127, 184–204, 213–233, and 248–268; these read SIISALVLGLIEGLTEFIPVS, GNTFAVLIQLGAILAILLVYF, FSVLLAFLPAALIGAAAHGFI, VLFETPMLICVVLIVGGIILY, AAEFSFFLAMPTMVGAFALDL, FDDVGLIAAGFIAAFIAGIFV, and PFAIWRILVGTAGLVGLWLLG.

Belongs to the UppP family.

It is found in the cell inner membrane. The enzyme catalyses di-trans,octa-cis-undecaprenyl diphosphate + H2O = di-trans,octa-cis-undecaprenyl phosphate + phosphate + H(+). Catalyzes the dephosphorylation of undecaprenyl diphosphate (UPP). Confers resistance to bacitracin. The chain is Undecaprenyl-diphosphatase from Rhizobium meliloti (strain 1021) (Ensifer meliloti).